Reading from the N-terminus, the 146-residue chain is MARNVLYPLYQLGGPQLRVFRTNFFIQLVRPGTAQPEDTVQFRIPMEMTRVDLRNYLEQIYNVPVAAVRTRVQHGSNRRRDHKNVRIKKPDYKVAYVQLAHGQTFTFPDLFPEKEPTSPDPLEEELPQQRQSSDPRCPGIPSWFGL.

The tract at residues 108–146 (PDLFPEKEPTSPDPLEEELPQQRQSSDPRCPGIPSWFGL) is disordered.

This sequence belongs to the universal ribosomal protein uL23 family. In terms of assembly, component of the mitochondrial ribosome large subunit (39S) which comprises a 16S rRNA and about 50 distinct proteins.

It localises to the mitochondrion. This is Large ribosomal subunit protein uL23m (Mrpl23) from Rattus norvegicus (Rat).